We begin with the raw amino-acid sequence, 211 residues long: Peptide methionine sulfoxide reductase MsrA (211 aa).

C52 is an active-site residue.

This sequence belongs to the MsrA Met sulfoxide reductase family.

The enzyme catalyses L-methionyl-[protein] + [thioredoxin]-disulfide + H2O = L-methionyl-(S)-S-oxide-[protein] + [thioredoxin]-dithiol. The catalysed reaction is [thioredoxin]-disulfide + L-methionine + H2O = L-methionine (S)-S-oxide + [thioredoxin]-dithiol. In terms of biological role, has an important function as a repair enzyme for proteins that have been inactivated by oxidation. Catalyzes the reversible oxidation-reduction of methionine sulfoxide in proteins to methionine. This is Peptide methionine sulfoxide reductase MsrA from Klebsiella pneumoniae (strain 342).